The primary structure comprises 271 residues: Interleukin-1 alpha (271 aa).

Positions 1–112 (MAKVPDMFED…DSEEEIIKPR (112 aa)) are excised as a propeptide. K82 carries the post-translational modification N6-acetyllysine. The tract at residues 82 to 86 (KKRRL) is nuclear localization signal (NLS). S87 is subject to Phosphoserine. N102, N121, N137, and N141 each carry an N-linked (GlcNAc...) asparagine glycan.

Belongs to the IL-1 family. Monomer. Interacts with TMED10; the interaction mediates the translocation from the cytoplasm into the ERGIC (endoplasmic reticulum-Golgi intermediate compartment) and thereby secretion. Interacts with IL1R1. Interacts with S100A13; this interaction is the first step in the export of IL1A, followed by direct translocation of this complex across the plasma membrane. Acetylated within its nuclear localization sequence, which impacts subcellular localization. In terms of processing, proteolytic processed by CAPN1 in a calcium-dependent manner. Cleavage from 31 kDa precursor to 18 kDa biologically active molecules. Post-translationally, phosphorylated. Phosphorylation greatly enhances susceptibility to digestion and promotes the conversion of pre-IL1A alpha to the biologically active IL1A.

The protein resides in the nucleus. Its subcellular location is the cytoplasm. The protein localises to the secreted. In terms of biological role, cytokine constitutively present intracellularly in nearly all resting non-hematopoietic cells that plays an important role in inflammation and bridges the innate and adaptive immune systems. After binding to its receptor IL1R1 together with its accessory protein IL1RAP, forms the high affinity interleukin-1 receptor complex. Signaling involves the recruitment of adapter molecules such as MYD88, IRAK1 or IRAK4. In turn, mediates the activation of NF-kappa-B and the three MAPK pathways p38, p42/p44 and JNK pathways. Within the cell, acts as an alarmin and cell death results in its liberation in the extracellular space after disruption of the cell membrane to induce inflammation and alert the host to injury or damage. In addition to its role as a danger signal, which occurs when the cytokine is passively released by cell necrosis, directly senses DNA damage and acts as signal for genotoxic stress without loss of cell integrity. The protein is Interleukin-1 alpha (IL1A) of Macaca fascicularis (Crab-eating macaque).